A 357-amino-acid polypeptide reads, in one-letter code: Membrane-bound lytic murein transglycosylase C (357 aa).

Residues 1 to 15 form the signal peptide; the sequence is MKKYLLLALLPFLYA. Cys-16 is lipidated: N-palmitoyl cysteine. The S-diacylglycerol cysteine moiety is linked to residue Cys-16.

The protein belongs to the transglycosylase Slt family.

It localises to the cell outer membrane. It carries out the reaction Exolytic cleavage of the (1-&gt;4)-beta-glycosidic linkage between N-acetylmuramic acid (MurNAc) and N-acetylglucosamine (GlcNAc) residues in peptidoglycan, from either the reducing or the non-reducing ends of the peptidoglycan chains, with concomitant formation of a 1,6-anhydrobond in the MurNAc residue.. Functionally, murein-degrading enzyme. May play a role in recycling of muropeptides during cell elongation and/or cell division. In Haemophilus influenzae (strain 86-028NP), this protein is Membrane-bound lytic murein transglycosylase C.